We begin with the raw amino-acid sequence, 3470 residues long: Mucin-4 (3470 aa).

The first 28 residues, 1–28 (MRGPHWRVPWLCLSCLYSCLLLLPDALA), serve as a signal peptide directing secretion. The disordered stretch occupies residues 32 to 163 (TQTPMSLSSS…STESTSVDSG (132 aa)). Residues 37–57 (SLSSSTRTSQMSSQASTSSTS) are compositionally biased toward low complexity. O-linked (GalNAc...) threonine glycosylation is found at Thr-42, Thr-44, Thr-65, Thr-68, Thr-87, Thr-91, Thr-96, Thr-97, Thr-98, Thr-99, Thr-100, Thr-103, Thr-104, Thr-106, Thr-117, Thr-130, Thr-131, Thr-132, Thr-145, Thr-146, Thr-150, Thr-151, Thr-152, and Thr-155. Residues 43–2501 (RTSQMSSQAS…ETLINDFTSS (2459 aa)) form a variable number of tandem repeats (VNTR) region. The span at 66–85 (EQTSTRDTPSSITTVSQSHH) shows a compositional bias: polar residues. The span at 86-111 (TTSMETSKPQTTTTTEVTTSTPSASS) shows a compositional bias: low complexity. Polar residues predominate over residues 112-129 (RDQIQTETSSQRTISPDG). The span at 130–162 (TTTSHAPSISSSAPSTTHMLTTTSSTESTSVDS) shows a compositional bias: low complexity. N-linked (GlcNAc...) asparagine glycosylation is present at Asn-188. The span at 199-220 (TLTQRQHTGSKQTSSKSQVNIV) shows a compositional bias: polar residues. Disordered stretches follow at residues 199 to 679 (TLTQ…STVS), 691 to 925 (FPQS…NMST), 938 to 1219 (TLPQ…MSTV), 1232 to 1400 (LPQS…MSTV), 1413 to 1524 (LPQS…MSTV), 1537 to 1647 (LPKS…NMST), and 1660 to 1992 (TLPQ…TEIT). Low complexity predominate over residues 221–232 (TSTLSTSTSDST). A compositionally biased stretch (polar residues) spans 233-243 (PAQTMSQVTSS). Thr-236 and Thr-241 each carry an O-linked (GalNAc...) threonine glycan. Over residues 251–272 (STSGVSSTSLTTTEVLTQTSST) the composition is skewed to low complexity. A compositionally biased stretch (polar residues) spans 273–283 (DSAPGNTTLRI). N-linked (GlcNAc...) asparagine glycosylation is found at Asn-278 and Asn-286. The span at 284-299 (TQNSTTHTTKVSTTST) shows a compositional bias: low complexity. A glycan (O-linked (GalNAc...) threonine) is linked at Thr-297. Over residues 300 to 335 (PQKLSPVSTLINSSQKMSTLPQNQHTESMDTSRQPQ) the composition is skewed to polar residues. Asn-311 carries an N-linked (GlcNAc...) asparagine glycan. Low complexity predominate over residues 336–346 (TTTTIEVTTST). A compositionally biased stretch (polar residues) spans 347–448 (PSASSLHQIQ…LTSSYSQHIQ (102 aa)). Thr-357, Thr-370, Thr-371, Thr-372, Thr-385, and Thr-423 each carry an O-linked (GalNAc...) threonine glycan. A compositionally biased stretch (low complexity) spans 449–470 (SKGTSSKSQTTTNTKVNTSTPS). Asn-465 carries N-linked (GlcNAc...) asparagine glycosylation. Residues 479-489 (TETSSQRTNSP) are compositionally biased toward polar residues. Thr-494 carries an O-linked (GalNAc...) threonine glycan. Over residues 496-510 (HAPSMSSSAPSTTHM) the composition is skewed to low complexity. Residues 511-577 (LSTTSSNQST…SQSQHTGSKG (67 aa)) show a composition bias toward polar residues. O-linked (GalNAc...) threonine glycosylation occurs at Thr-513. Asn-517 carries N-linked (GlcNAc...) asparagine glycosylation. O-linked (GalNAc...) threonine glycans are attached at residues Thr-542 and Thr-545. Residue Asn-550 is glycosylated (N-linked (GlcNAc...) asparagine). O-linked (GalNAc...) threonine glycans are attached at residues Thr-551, Thr-584, Thr-585, Thr-586, Thr-587, Thr-588, Thr-592, Thr-594, Thr-599, Thr-605, Thr-618, Thr-619, Thr-620, Thr-633, Thr-634, Thr-639, Thr-640, and Thr-655. Residues 578 to 599 (TSSNPQTTTTTEVTTSTPSATT) are compositionally biased toward low complexity. Polar residues predominate over residues 600-631 (HDQIQTETSSQNTISPGETTTSYAPIMSSSAP). The span at 632-647 (STTHMLSTTSSTQSTS) shows a compositional bias: low complexity. Composition is skewed to polar residues over residues 653-679 (TTTL…STVS) and 691-701 (FPQSQHTGSKG). Residue Asn-674 is glycosylated (N-linked (GlcNAc...) asparagine). Residues Thr-702, Thr-708, Thr-709, Thr-710, Thr-711, and Thr-716 are each glycosylated (O-linked (GalNAc...) threonine). Low complexity predominate over residues 702 to 723 (TSSNPQTTTTPVVTTSNPSATS). An N-linked (GlcNAc...) asparagine glycan is attached at Asn-718. Positions 724 to 741 (RDQIQTETSSQRTISPGE) are enriched in polar residues. Residues 742 to 772 (TTTSYASIMSSSAPSTTHMLTTTSSTQSTSV) are compositionally biased toward low complexity. 4 O-linked (GalNAc...) threonine glycosylation sites follow: Thr-743, Thr-744, Thr-757, and Thr-758. The segment covering 780–824 (VRTQGSTPATTQVSPSSQNMSTVSTPITSTQILSTLPQSQHTGSK) has biased composition (polar residues). The N-linked (GlcNAc...) asparagine glycan is linked to Asn-798. Residues 825–848 (GTSSNPQTTTSPVVTTSTPSGTSG) show a composition bias toward low complexity. Residues Thr-826, Thr-832, Thr-833, Thr-834, Thr-839, Thr-840, Thr-842, Thr-846, and Thr-853 are each glycosylated (O-linked (GalNAc...) threonine). A compositionally biased stretch (polar residues) spans 849–879 (DQIQTETSSQRTISPGKTTTSHALNINSSAP). Asn-875 carries N-linked (GlcNAc...) asparagine glycosylation. Positions 880–895 (STTHMLSTTSSTQSTS) are enriched in low complexity. O-linked (GalNAc...) threonine glycosylation is found at Thr-901 and Thr-902. Polar residues predominate over residues 901 to 925 (TTAGRTQGSTPATTQVSPSSQNMST). N-linked (GlcNAc...) asparagine glycosylation occurs at Asn-922. The segment covering 948–968 (KSTSTNPQTTTTPEVTTSNPS) has biased composition (low complexity). Thr-950, Thr-952, Thr-956, Thr-957, Thr-958, Thr-959, Thr-963, and Thr-964 each carry an O-linked (GalNAc...) threonine glycan. A glycan (N-linked (GlcNAc...) asparagine) is linked at Asn-966. The segment covering 969–1003 (ATSHDQIETETSSQRTISPGETTTSYAPIMSSSAP) has biased composition (polar residues). 8 O-linked (GalNAc...) threonine glycosylation sites follow: Thr-990, Thr-991, Thr-992, Thr-1005, Thr-1006, Thr-1011, Thr-1012, and Thr-1015. Residues 1004 to 1019 (STTHMLSTTSSTQSTS) show a composition bias toward low complexity. Over residues 1020–1065 (VDTRNTTTLTTQGSTPATTQVSPSSKNMSTVSTPITSTHKLSTLPQ) the composition is skewed to polar residues. Residue Asn-1024 is glycosylated (N-linked (GlcNAc...) asparagine). O-linked (GalNAc...) threonine glycosylation is found at Thr-1025, Thr-1026, Thr-1027, Thr-1029, and Thr-1038. N-linked (GlcNAc...) asparagine glycosylation is found at Asn-1046, Asn-1072, and Asn-1091. Over residues 1066-1083 (SQHTGSNGTSSSSSTPAT) the composition is skewed to low complexity. Over residues 1091–1120 (NMSTVSTPITTTHKLSTLSQSQHTGSKGTS) the composition is skewed to polar residues. Residues 1121–1140 (SNPQTTTTPVMTTSTPSATT) are compositionally biased toward low complexity. O-linked (GalNAc...) threonine glycans are attached at residues Thr-1125, Thr-1126, Thr-1127, Thr-1128, Thr-1132, Thr-1133, Thr-1135, Thr-1140, Thr-1174, Thr-1198, and Thr-1207. 2 stretches are compositionally biased toward polar residues: residues 1141 to 1219 (HDQI…MSTV) and 1232 to 1242 (LPQSQHTGSKG). N-linked (GlcNAc...) asparagine glycosylation is present at Asn-1215. Thr-1243, Thr-1245, Thr-1249, Thr-1250, Thr-1251, Thr-1252, Thr-1256, Thr-1257, Thr-1259, Thr-1263, Thr-1270, Thr-1283, Thr-1284, Thr-1285, Thr-1298, Thr-1299, Thr-1304, Thr-1305, Thr-1318, and Thr-1319 each carry an O-linked (GalNAc...) threonine glycan. Low complexity predominate over residues 1243 to 1264 (TSTNPQTTTTPEVTTSTPSATS). Polar residues predominate over residues 1265 to 1296 (RDQIQTETSSQRTISPGETTTSHAPIMSSSAP). Low complexity predominate over residues 1297–1312 (STTHMLSTTSSTQSTS). Residues 1318–1353 (TTAGRTQGSTPATTQVSPSSQNMTTTSHALMSSSAP) show a composition bias toward polar residues. N-linked (GlcNAc...) asparagine glycosylation is present at Asn-1339. O-linked (GalNAc...) threonine glycans are attached at residues Thr-1341, Thr-1342, Thr-1355, Thr-1356, Thr-1365, Thr-1368, Thr-1372, Thr-1375, Thr-1376, Thr-1377, and Thr-1379. Over residues 1354 to 1390 (STTHMLSTTSSTQSTSVDTRHTTTVTTQGSTPATTQV) the composition is skewed to low complexity. Polar residues-rich tracts occupy residues 1391–1400 (LPSSQNMSTV) and 1413–1477 (LPQS…SSAP). N-linked (GlcNAc...) asparagine glycosylation is present at Asn-1396. Thr-1426, Thr-1430, Thr-1431, Thr-1440, Thr-1451, Thr-1453, Thr-1464, Thr-1465, and Thr-1466 each carry an O-linked (GalNAc...) threonine glycan. Asn-1471 carries an N-linked (GlcNAc...) asparagine glycan. A compositionally biased stretch (low complexity) spans 1478–1489 (STTHMLSSTSST). Thr-1479, Thr-1480, Thr-1499, and Thr-1512 each carry an O-linked (GalNAc...) threonine glycan. Polar residues-rich tracts occupy residues 1490–1524 (QITS…MSTV) and 1537–1553 (LPKS…SNPQ). Asn-1520 carries N-linked (GlcNAc...) asparagine glycosylation. 4 O-linked (GalNAc...) threonine glycosylation sites follow: Thr-1554, Thr-1555, Thr-1557, and Thr-1562. Positions 1554-1569 (TTITPVVTTSTPSASS) are enriched in low complexity. The span at 1570 to 1587 (RDQIQTETSFQRTISPGE) shows a compositional bias: polar residues. 8 O-linked (GalNAc...) threonine glycosylation sites follow: Thr-1588, Thr-1589, Thr-1590, Thr-1604, Thr-1609, Thr-1627, Thr-1635, and Thr-1636. A compositionally biased stretch (low complexity) spans 1588–1609 (TTTSHAPSMSSSAPSSTHMLST). The span at 1610–1647 (ASSTQITSVDTRHTTAITTQGSTPATTQVSPSSQNMST) shows a compositional bias: polar residues. An N-linked (GlcNAc...) asparagine glycan is attached at Asn-1644. The segment covering 1670–1693 (KSTSTNPQTTTTPRVTTSTPSASS) has biased composition (low complexity). Residues Thr-1672, Thr-1674, Thr-1678, Thr-1679, Thr-1680, Thr-1681, Thr-1685, Thr-1686, Thr-1688, Thr-1699, and Thr-1714 are each glycosylated (O-linked (GalNAc...) threonine). Residues 1694-1725 (RDQIQTETSSQRTISPGKTTTSHVPNMNSSAP) are compositionally biased toward polar residues. Asn-1721 carries an N-linked (GlcNAc...) asparagine glycan. The span at 1726–1742 (STTHILSTTSSIQSTSG) shows a compositional bias: low complexity. Polar residues predominate over residues 1747 to 1837 (TTAVRTQGST…SSQRTISPGE (91 aa)). A glycan (N-linked (GlcNAc...) asparagine) is linked at Asn-1770. Thr-1838, Thr-1839, Thr-1840, Thr-1854, Thr-1873, Thr-1874, Thr-1888, Thr-1889, and Thr-1891 each carry an O-linked (GalNAc...) threonine glycan. The span at 1838–1859 (TTTSHASSLSSSAPSSTHMLST) shows a compositional bias: low complexity. Residues 1860 to 1877 (ASSTEITSGDTRHTTAIV) show a composition bias toward polar residues. Residues 1878 to 1895 (TQGSTPATTQTTLTPSSQ) show a composition bias toward low complexity. An N-linked (GlcNAc...) asparagine glycan is attached at Asn-1896. Polar residues predominate over residues 1896 to 1927 (NMSTVSTPITSTHKLSPLPQSQHTENMGTSSN). Positions 1928–1945 (PQTTTTPEVTTSTPSATS) are enriched in low complexity. O-linked (GalNAc...) threonine glycans are attached at residues Thr-1930, Thr-1931, Thr-1932, Thr-1933, Thr-1937, Thr-1938, Thr-1940, Thr-1964, Thr-1965, Thr-1966, and Thr-1980. Over residues 1946 to 1992 (YDQIQTETSFQRTISPGETTTSHAPSMSNSAPSSTHKLSTASSTEIT) the composition is skewed to polar residues. Residue Asn-2022 is glycosylated (N-linked (GlcNAc...) asparagine). Positions 2037-2055 (STLRQSQHTGSKGTSSNHQ) are enriched in polar residues. Disordered stretches follow at residues 2037 to 2107 (STLR…NTTH), 2139 to 2185 (QVSL…NITP), 2205 to 2237 (TMSW…ILTS), and 2262 to 2368 (TSTS…TVPL). Thr-2056 and Thr-2057 each carry an O-linked (GalNAc...) threonine glycan. The segment covering 2056–2071 (TTTTPVVTTSTSSATS) has biased composition (low complexity). Positions 2072–2089 (RDQIQTETSSLRTISPDG) are enriched in polar residues. Thr-2090, Thr-2091, and Thr-2092 each carry an O-linked (GalNAc...) threonine glycan. Residues 2090-2107 (TTTSHASSMSSSSPNTTH) are compositionally biased toward low complexity. An N-linked (GlcNAc...) asparagine glycan is attached at Asn-2104. O-linked (GalNAc...) threonine glycans are attached at residues Thr-2105 and Thr-2106. N-linked (GlcNAc...) asparagine glycosylation is found at Asn-2148, Asn-2182, and Asn-2225. Composition is skewed to polar residues over residues 2205-2229 (TMSW…TSPA) and 2262-2303 (TSTS…QTSI). Thr-2264, Thr-2352, Thr-2354, Thr-2359, and Thr-2360 each carry an O-linked (GalNAc...) threonine glycan. Low complexity predominate over residues 2344 to 2367 (TAVSATSSTLTSPSPTTASRSTVP). The NIDO domain occupies 2458–2613 (PFWADADFSS…GLQVYRLHRE (156 aa)). In terms of domain architecture, AMOP spans 2614-2726 (ERPNYRLKCL…SFCVWYQLRR (113 aa)). A VWFD domain is found at 2738 to 2937 (RPAWTFGDPH…TWHVNGTGLL (200 aa)). Residues Asn-2755, Asn-2773, Asn-2801, Asn-2827, Asn-2844, Asn-2853, Asn-2888, Asn-2909, Asn-2916, Asn-2932, Asn-2958, Asn-2985, Asn-3003, Asn-3014, Asn-3054, Asn-3079, Asn-3102, Asn-3109, Asn-3157, and Asn-3174 are each glycosylated (N-linked (GlcNAc...) asparagine). One can recognise an EGF-like 1 domain in the interval 3173-3212 (PNRSCPMNYCYNNGHCDISEAPGCQPTCTCPPAFTDNRCF). Disulfide bonds link Cys-3177-Cys-3188, Cys-3182-Cys-3200, and Cys-3202-Cys-3211. 3 N-linked (GlcNAc...) asparagine glycosylation sites follow: Asn-3240, Asn-3247, and Asn-3353. The EGF-like 2 domain maps to 3382–3421 (VSPCSEGYCHNGGQCKHLPDGPQCSCASFTIYSSSGEHCE). Intrachain disulfides connect Cys-3385-Cys-3396, Cys-3390-Cys-3405, and Cys-3407-Cys-3420. A helical membrane pass occupies residues 3432–3452 (GILFGTLGALLLLGILAFMIF).

As to quaternary structure, a heterodimeric complex, composed of a mucin-4 alpha chain and a cysteine-rich transmembrane mucin-4 beta chain. Mucin-4 beta chain interacts with ERBB2 via the EGF-like domain 1. In nonpolarized cells, associates with ERBB2 and ERBB3. In terms of processing, proteolytically cleaved into 2 chains, mucin-4 alpha chain and mucin-4 beta chain. Highly O-glycosylated. Post-translationally, predominantly N-glycosylated. As to expression, expressed in trachea, duodenum and intestine. Lower expression in stomach, salivary glands, liver, gallbladder, and kidney.

Its subcellular location is the cell membrane. The protein resides in the secreted. Its function is as follows. Membrane-bound mucin, a family of highly glycosylated proteins that constitute the major component of the mucus, the slimy and viscous secretion covering epithelial surfaces. These glycoproteins play important roles in the protection of the epithelium and are implicated in epithelial renewal and differentiation. Regulates cellular behavior through both anti-adhesive effects on cell-cell and cell-extracellular matrix interactions and its ability to act as an intramembrane ligand for ERBB2. Plays an important role in proliferation and differentiation of epithelial cells by inducing specific phosphorylation of ERBB2. In polarized epithelial cells, segregates ERBB2 and other ERBB receptors and prevents ERBB2 from acting as a coreceptor. The interaction with ERBB2 leads to enhanced expression of CDKN1B. The formation of a MUC4-ERBB2-ERBB3-NRG1 complex leads to down-regulation of CDKN1B, resulting in repression of apoptosis and stimulation of proliferation. Its ability to promote tumor growth may be mainly due to repression of apoptosis as opposed to proliferation. The chain is Mucin-4 (Muc4) from Mus musculus (Mouse).